We begin with the raw amino-acid sequence, 205 residues long: Ribosomal RNA small subunit methyltransferase G 1 (205 aa).

S-adenosyl-L-methionine is bound by residues glycine 77, leucine 82, 100–102, 129–130, and arginine 138; these read EKS and LE.

This sequence belongs to the methyltransferase superfamily. RNA methyltransferase RsmG family.

It is found in the cytoplasm. It catalyses the reaction guanosine(527) in 16S rRNA + S-adenosyl-L-methionine = N(7)-methylguanosine(527) in 16S rRNA + S-adenosyl-L-homocysteine. Functionally, specifically methylates the N7 position of guanine in position 527 of 16S rRNA. This chain is Ribosomal RNA small subunit methyltransferase G 1, found in Bdellovibrio bacteriovorus (strain ATCC 15356 / DSM 50701 / NCIMB 9529 / HD100).